Reading from the N-terminus, the 39-residue chain is Cytochrome b559 subunit beta (39 aa).

A helical membrane pass occupies residues 14 to 30 (WLAIHGLAVPTVFFLGS). Position 18 (H18) interacts with heme.

This sequence belongs to the PsbE/PsbF family. As to quaternary structure, heterodimer of an alpha subunit and a beta subunit. PSII is composed of 1 copy each of membrane proteins PsbA, PsbB, PsbC, PsbD, PsbE, PsbF, PsbH, PsbI, PsbJ, PsbK, PsbL, PsbM, PsbT, PsbX, PsbY, PsbZ, Psb30/Ycf12, at least 3 peripheral proteins of the oxygen-evolving complex and a large number of cofactors. It forms dimeric complexes. Heme b serves as cofactor.

The protein resides in the plastid. Its subcellular location is the chloroplast thylakoid membrane. Its function is as follows. This b-type cytochrome is tightly associated with the reaction center of photosystem II (PSII). PSII is a light-driven water:plastoquinone oxidoreductase that uses light energy to abstract electrons from H(2)O, generating O(2) and a proton gradient subsequently used for ATP formation. It consists of a core antenna complex that captures photons, and an electron transfer chain that converts photonic excitation into a charge separation. The protein is Cytochrome b559 subunit beta of Psilotum nudum (Whisk fern).